Consider the following 140-residue polypeptide: Large ribosomal subunit protein uL13 (140 aa).

The protein belongs to the universal ribosomal protein uL13 family. Part of the 50S ribosomal subunit.

Its function is as follows. This protein is one of the early assembly proteins of the 50S ribosomal subunit, although it is not seen to bind rRNA by itself. It is important during the early stages of 50S assembly. This is Large ribosomal subunit protein uL13 from Nautilia profundicola (strain ATCC BAA-1463 / DSM 18972 / AmH).